The primary structure comprises 148 residues: uncharacterized protein (148 aa).

The first 23 residues, M1–A23, serve as a signal peptide directing secretion. A disordered region spans residues Q22 to L45.

To M.leprae ML2452.

This is an uncharacterized protein from Mycobacterium bovis (strain ATCC BAA-935 / AF2122/97).